The chain runs to 59 residues: UPF0391 membrane protein lpp2589 (59 aa).

A run of 2 helical transmembrane segments spans residues 5 to 25 (ALIF…GIAV) and 30 to 50 (IAKI…IMGL).

Belongs to the UPF0391 family.

The protein resides in the cell membrane. The polypeptide is UPF0391 membrane protein lpp2589 (Legionella pneumophila (strain Paris)).